The chain runs to 30 residues: Cyclotide cycloviolacin O17 (30 aa).

Positions 1 to 30 (GIPCGESCVWIPCISAAIGCSCKNKVCYRN) form a cross-link, cyclopeptide (Gly-Asn). 3 disulfides stabilise this stretch: cysteine 4-cysteine 20, cysteine 8-cysteine 22, and cysteine 13-cysteine 27.

Post-translationally, this is a cyclic peptide.

Probably participates in a plant defense mechanism. The sequence is that of Cyclotide cycloviolacin O17 from Psychotria brachyceras.